Reading from the N-terminus, the 312-residue chain is Acetyl-coenzyme A carboxylase carboxyl transferase subunit alpha (312 aa).

Positions 32–286 (LLEERLARLR…KEALLKALEE (255 aa)) constitute a CoA carboxyltransferase C-terminal domain.

This sequence belongs to the AccA family. Acetyl-CoA carboxylase is a heterohexamer composed of biotin carboxyl carrier protein (AccB), biotin carboxylase (AccC) and two subunits each of ACCase subunit alpha (AccA) and ACCase subunit beta (AccD).

The protein localises to the cytoplasm. It carries out the reaction N(6)-carboxybiotinyl-L-lysyl-[protein] + acetyl-CoA = N(6)-biotinyl-L-lysyl-[protein] + malonyl-CoA. It functions in the pathway lipid metabolism; malonyl-CoA biosynthesis; malonyl-CoA from acetyl-CoA: step 1/1. Component of the acetyl coenzyme A carboxylase (ACC) complex. First, biotin carboxylase catalyzes the carboxylation of biotin on its carrier protein (BCCP) and then the CO(2) group is transferred by the carboxyltransferase to acetyl-CoA to form malonyl-CoA. This Thermus thermophilus (strain ATCC BAA-163 / DSM 7039 / HB27) protein is Acetyl-coenzyme A carboxylase carboxyl transferase subunit alpha.